We begin with the raw amino-acid sequence, 67 residues long: Major cold shock protein (67 aa).

The region spanning 4–63 (GTVKWFNAEKGFGFISTENGQDVFAHFSAIQTSGFKTLEEGQKVAFDVEEGQRGPQAVNI) is the CSD domain.

Homodimer.

It localises to the cytoplasm. The protein is Major cold shock protein (cspA) of Streptococcus pyogenes serotype M6 (strain ATCC BAA-946 / MGAS10394).